Reading from the N-terminus, the 322-residue chain is MSLLRNFFSFTFSANSIITKPYFAIPIKAMEATSELNLNYPKPISAPPPPISKDIELRRAMEASSKSSLFNLTRDDILYEDEYLMAVNKPKGVYCEAVLRSAPQIVLDSSSEYHLANRLDRDTSGVMIITKSHKVAAKLVKAFTEHKIRKSYIALCIGSSPNWRRVTVSSGHGRSKHGAWRVYAALDVGRVLPGGSFVRDMETTFEVVSVNSVKNESCELEDVNHVIVAEGERELSCGGDDDDVVVVVRAFPRSGRTHQIRLHCQYLGIPIRGDVKYHGVYEWNGRTFEGHELHAECLSLDHPVTGDSIVIRAPLPYWAAGD.

Residue Asp-120 is part of the active site.

This sequence belongs to the pseudouridine synthase RluA family.

It catalyses the reaction a uridine in RNA = a pseudouridine in RNA. This Arabidopsis thaliana (Mouse-ear cress) protein is RNA pseudouridine synthase 1.